A 259-amino-acid chain; its full sequence is Large ribosomal subunit protein uL2m (259 aa).

The interval 234 to 259 (VAMNPVDHPNGGRTKTPKPERSPGVE) is disordered. Over residues 250-259 (PKPERSPGVE) the composition is skewed to basic and acidic residues.

The protein belongs to the universal ribosomal protein uL2 family.

The protein resides in the mitochondrion. In Paramecium tetraurelia, this protein is Large ribosomal subunit protein uL2m (RPL2).